We begin with the raw amino-acid sequence, 318 residues long: Na(+)-translocating NADH-quinone reductase subunit C (318 aa).

A helical membrane pass occupies residues 13–33 (WYIILFIFVLSLVAGTLLSSV). Threonine 281 carries the FMN phosphoryl threonine modification.

Belongs to the NqrC family. As to quaternary structure, composed of six subunits; NqrA, NqrB, NqrC, NqrD, NqrE and NqrF. Requires FMN as cofactor.

Its subcellular location is the cell inner membrane. The catalysed reaction is a ubiquinone + n Na(+)(in) + NADH + H(+) = a ubiquinol + n Na(+)(out) + NAD(+). Its function is as follows. NQR complex catalyzes the reduction of ubiquinone-1 to ubiquinol by two successive reactions, coupled with the transport of Na(+) ions from the cytoplasm to the periplasm. NqrA to NqrE are probably involved in the second step, the conversion of ubisemiquinone to ubiquinol. This chain is Na(+)-translocating NADH-quinone reductase subunit C, found in Chlamydia muridarum (strain MoPn / Nigg).